Reading from the N-terminus, the 432-residue chain is Adenylosuccinate synthetase (432 aa).

GTP contacts are provided by residues 13–19 and 41–43; these read GDEGKGK and GHT. Catalysis depends on Asp-14, which acts as the Proton acceptor. Residues Asp-14 and Gly-41 each coordinate Mg(2+). IMP-binding positions include 14–17, 39–42, Thr-130, Arg-144, Gln-225, Thr-240, and Arg-306; these read DEGK and NAGH. His-42 acts as the Proton donor in catalysis. Substrate is bound at residue 302–308; it reads TVTGRAR. GTP contacts are provided by residues Arg-308, 334–336, and 416–418; these read KLD and STG.

The protein belongs to the adenylosuccinate synthetase family. In terms of assembly, homodimer. The cofactor is Mg(2+).

The protein resides in the cytoplasm. It carries out the reaction IMP + L-aspartate + GTP = N(6)-(1,2-dicarboxyethyl)-AMP + GDP + phosphate + 2 H(+). It participates in purine metabolism; AMP biosynthesis via de novo pathway; AMP from IMP: step 1/2. Plays an important role in the de novo pathway of purine nucleotide biosynthesis. Catalyzes the first committed step in the biosynthesis of AMP from IMP. This Herminiimonas arsenicoxydans protein is Adenylosuccinate synthetase.